The chain runs to 925 residues: Nuclear factor of activated T-cells, cytoplasmic 2 (925 aa).

Residues 1–95 (MNAPERQPQP…FGEPDRVGPQ (95 aa)) are disordered. Position 23 is a phosphoserine (S23). Positions 26–34 (DELDFSILF) match the 9aaTAD motif. S99, S107, and S110 each carry phosphoserine. A calcineurin-binding region spans residues 111-116 (PRIEIT). The transactivation domain A (TAD-A) stretch occupies residues 119-199 (HELIQAVGPL…CVSPNNGGPD (81 aa)). A phosphoserine mark is found at S148, S168, S171, S172, S174, S175, S177, and S180. The interval 161–175 (YREPLCLSPASSGSS) is required for cytoplasmic retention of the phosphorylated form. Tandem repeats lie at residues 184–200 (SPYTSPCVSPNNGGPDD) and 213–229 (SPRTSPIMSPRTSLAED). The interval 184-286 (SPYTSPCVSP…PQPSSHVAPQ (103 aa)) is 3 X approximate SP repeats. Positions 195 to 297 (NGGPDDLCPQ…HGSPAGYPPV (103 aa)) are disordered. 5 positions are modified to phosphoserine: S213, S217, S221, S236, and S243. Residues 214–224 (PRTSPIMSPRT) show a composition bias toward polar residues. Residues 251–253 (KRR) carry the Nuclear localization signal motif. Residues S255, S268, S274, S276, S280, S326, S330, and S363 each carry the phosphoserine modification. A compositionally biased stretch (low complexity) spans 264–281 (PPGASPQRSRSPSPQPSS). The stretch at 272–286 (SRSPSPQPSSHVAPQ) is one 3; approximate repeat. Residues 392–574 (ASLPPLEWPL…NPIECSQRSA (183 aa)) form the RHD domain. A DNA-binding region spans residues 421 to 428 (RAHYETEG). The Nuclear localization signal signature appears at 664–666 (KRK). S755, S757, S759, S856, and S859 each carry phosphoserine. The disordered stretch occupies residues 839–894 (PGTTRPGPPPVSQGQRLSPGSYPTVIQQQNATSQRAAKNGPPVSDQKEVLPAGVTI). Over residues 862 to 874 (TVIQQQNATSQRA) the composition is skewed to polar residues. The short motif at 904–913 (YLDDVNEIIR) is the Nuclear export signal element.

As to quaternary structure, member of the multicomponent NFATC transcription complex that consists of at least two components, a pre-existing cytoplasmic component NFATC2 and an inducible nuclear component NFATC1. Other members such as NFATC4, NFATC3 or members of the activating protein-1 family, MAF, GATA4 and Cbp/p300 can also bind the complex. The phosphorylated form specifically interacts with XPO1; which mediates nuclear export. NFATC proteins bind to DNA as monomers. Interacts with NFATC2IP. Interacts with FOXP3. Interacts with TBX21 ('Thr-303' phosphorylated form). Interacts with KAT2A. Interacts with HOMER2 and HOMER3; this interaction competes with calcineurin/PPP3CA-binding and hence prevents NFATC2 dephosphorylation and activation. Interacts with protein phosphatase PPP3CA/calcineurin A. Interacts with AKAP5 (via leucine zipper domain); this is required for NFATC2/NFAT1 recruitment to CRAC channels. In resting cells, phosphorylated by NFATC-kinase on at least 18 sites in the 99-363 region. Upon cell stimulation, all these sites except Ser-243 are dephosphorylated by calcineurin. Dephosphorylation induces a conformational change that simultaneously exposes an NLS and masks an NES, which results in nuclear localization. Simultaneously, Ser-53 or Ser-56 is phosphorylated; which is required for full transcriptional activity. Post-translationally, ubiquitinated in endothelial cells by RNF213 downstream of the non-canonical Wnt signaling pathway, leading to its degradation by the proteasome. Expressed in thymus, spleen, heart, testis, brain, placenta, muscle and pancreas. Isoform 1 is highly expressed in the small intestine, heart, testis, prostate, thymus, placenta and thyroid. Isoform 3 is highly expressed in stomach, uterus, placenta, trachea and thyroid.

Its subcellular location is the cytoplasm. The protein localises to the nucleus. Its function is as follows. Plays a role in the inducible expression of cytokine genes in T-cells, especially in the induction of the IL-2, IL-3, IL-4, TNF-alpha or GM-CSF. Promotes invasive migration through the activation of GPC6 expression and WNT5A signaling pathway. Is involved in the negative regulation of chondrogenesis. Recruited by AKAP5 to ORAI1 pore-forming subunit of CRAC channels in Ca(2+) signaling microdomains where store-operated Ca(2+) influx is coupled to calmodulin and calcineurin signaling and activation of NFAT-dependent transcriptional responses. This is Nuclear factor of activated T-cells, cytoplasmic 2 (NFATC2) from Homo sapiens (Human).